We begin with the raw amino-acid sequence, 133 residues long: Small ribosomal subunit protein uS11 (133 aa).

The interval Val-114 to Val-133 is disordered.

It belongs to the universal ribosomal protein uS11 family. As to quaternary structure, part of the 30S ribosomal subunit.

Its function is as follows. Located on the platform of the 30S subunit. The polypeptide is Small ribosomal subunit protein uS11 (Archaeoglobus fulgidus (strain ATCC 49558 / DSM 4304 / JCM 9628 / NBRC 100126 / VC-16)).